The chain runs to 137 residues: MLQPKRTKFRKQQKLRNRGLAYRGNKVSFGEFGLQATSRGRITARQIEAGRRAISRHIKRGGKIWIRIFPDKPITQKPLEVRMGKGKGSVEYWVAQIQPGRVLYEITGVKEELAREAFARAAAKMPVQTTFVEKQVM.

The protein belongs to the universal ribosomal protein uL16 family. Part of the 50S ribosomal subunit.

In terms of biological role, binds 23S rRNA and is also seen to make contacts with the A and possibly P site tRNAs. The sequence is that of Large ribosomal subunit protein uL16 from Francisella tularensis subsp. holarctica (strain FTNF002-00 / FTA).